The primary structure comprises 727 residues: Zinc metalloproteinase nas-38 (727 aa).

The signal sequence occupies residues 1–25 (MPSPSYNRHIIIASCFCCLLIFSSA). Positions 26–114 (ARVPKASKKH…FTQGKREKRK (89 aa)) are excised as a propeptide. Residues 113–312 (RKIGRNPLYK…QAINMAYGCT (200 aa)) enclose the Peptidase M12A domain. 2 cysteine pairs are disulfide-bonded: Cys158/Cys311 and Cys179/Cys199. Residue His207 coordinates Zn(2+). Glu208 is an active-site residue. 2 residues coordinate Zn(2+): His211 and His217. Positions 306 to 345 (NMAYGCTESCADLPCLRNGYTHPNNCSMCACPEGLSGRYC) constitute an EGF-like domain. N-linked (GlcNAc...) asparagine glycosylation is present at Asn330. The 117-residue stretch at 353–469 (AQCGGVIFAT…AGFKAKFWSN (117 aa)) folds into the CUB domain. 2 disulfides stabilise this stretch: Cys355-Cys383 and Cys411-Cys432. Disordered regions lie at residues 473–506 (PEGV…QSTT) and 532–561 (TPLT…TEPS). The segment covering 535–554 (TSSSTTTESTTVSSTTQSTT) has biased composition (low complexity). The TSP type-1 domain maps to 610-658 (ECGCGAWSEWQGECSQQCGGCGHRLRKRECKKEACRKEEKRPCNFSACP). Cystine bridges form between Cys611–Cys644, Cys623–Cys652, Cys627–Cys657, and Cys639–Cys644. Asn653 and Asn714 each carry an N-linked (GlcNAc...) asparagine glycan.

Zn(2+) serves as cofactor. As to expression, expressed in the epidermis, the excretory canal cell, duct cell, pore cell, and excretory gland cell. Expressed in an oscillating pattern in epithelial cells with increased expression during the lethargus phase which occurs during molting between larval and adult stages. Not expressed in seam cells or in the RIS neuron.

It is found in the secreted. In terms of biological role, metalloprotease. As part of the innate immune response to molting and injury to the adult epidermis, positively regulates the activity of the transcription factor sta-2 to promote the expression of epidermal antimicrobial peptides such as nlp-29. Through regulating the expression of epidermal antimicrobial peptides such as nlp-29, modulates sleep duration and locomotion quiescence during the sleep-like state called lethargus which occurs during molting between larval and adult stages. This may occur through the sleep-active RIS neuron. The sequence is that of Zinc metalloproteinase nas-38 from Caenorhabditis elegans.